The chain runs to 302 residues: Putative 2-dehydro-3-deoxy-D-gluconate aldolase YagE (302 aa).

Catalysis depends on charge relay system residues Ser-49 and Tyr-112. Catalysis depends on Tyr-138, which acts as the Proton donor. Lys-167 functions as the Schiff-base intermediate with substrate in the catalytic mechanism.

It belongs to the DapA family. A dimer of dimers.

It is found in the cytoplasm. It catalyses the reaction 2-dehydro-3-deoxy-D-gluconate = D-glyceraldehyde + pyruvate. The catalysed reaction is 2-dehydro-3-deoxy-D-arabinonate = glycolaldehyde + pyruvate. Catalyzes the formation of 2-keto-3-deoxy-gluconate (KDG) from pyruvate and glyceraldehyde. May also function as a 2-dehydro-3-deoxy-D-pentonate aldolase. Overexpression leads to increased growth (over 2 hours) in the presence of the antibiotics norfloxacin, ampicillin and streptomycin. This Escherichia coli (strain K12) protein is Putative 2-dehydro-3-deoxy-D-gluconate aldolase YagE (yagE).